The sequence spans 220 residues: Putative threonylcarbamoyl-AMP synthase (220 aa).

One can recognise a YrdC-like domain in the interval 17–202 (ARGIASAVAA…TPRILRAGPV (186 aa)).

This sequence belongs to the SUA5 family.

The protein resides in the cytoplasm. The catalysed reaction is L-threonine + hydrogencarbonate + ATP = L-threonylcarbamoyladenylate + diphosphate + H2O. In terms of biological role, required for the formation of a threonylcarbamoyl group on adenosine at position 37 (t(6)A37) in tRNAs that read codons beginning with adenine. Catalyzes the conversion of L-threonine, HCO(3)(-)/CO(2) and ATP to give threonylcarbamoyl-AMP (TC-AMP) as the acyladenylate intermediate, with the release of diphosphate. This Mycobacterium leprae (strain TN) protein is Putative threonylcarbamoyl-AMP synthase.